A 581-amino-acid polypeptide reads, in one-letter code: Pre-mRNA 3'-end-processing factor FIP1 (581 aa).

Composition is skewed to basic and acidic residues over residues 1–10 and 32–42; these read MSAGEVERLV and VHVHSDLAKDL. 3 disordered regions span residues 1-95, 211-282, and 320-581; these read MSAG…EDDV, TVQQ…ESPD, and RSAT…APAE. The interval 1–110 is sufficient for interaction with PAPOLA; the sequence is MSAGEVERLV…DIKTGAPQYG (110 aa). A necessary for stimulating PAPOLA activity region spans residues 1–332; sequence MSAGEVERLV…TEVDNNFSKP (332 aa). Composition is skewed to acidic residues over residues 43 to 54 and 80 to 94; these read DENEVERPEEEN and TEDDSDSDSDDDEDD. A phosphoserine mark is found at Ser-84, Ser-86, and Ser-88. Residues 136-219 are sufficient for interaction with CPSF4; the sequence is KGVDLDAPGS…ITVQQGRTGN (84 aa). Residues 247 to 267 are compositionally biased toward low complexity; the sequence is SRNSTSSQSQTSTASRKASSS. Residues 271–282 are compositionally biased toward basic and acidic residues; it reads WQDRYGRAESPD. At Ser-280 the chain carries Phosphoserine. Over residues 320 to 330 the composition is skewed to polar residues; the sequence is RSATEVDNNFS. Over residues 331–389 the composition is skewed to pro residues; sequence KPPPFFPPGAPPTHLPPPPFLPPPPTVSTAPPLIPPPGIPITVPPPGFPPPPGAPPPSL. A Phosphotyrosine modification is found at Tyr-411. The span at 419–435 shows a compositional bias: polar residues; that stretch reads LTSSAPSWPSLVDTTKQ. The interval 428–581 is sufficient for interaction with CPSF1 and CSTF3; the sequence is SLVDTTKQWD…QESTEAAPAE (154 aa). Over residues 439-479 the composition is skewed to basic and acidic residues; sequence YARREKDRDRDRERDRDRERERDRDRERERTRERERERDHS. An arg/Asp/Glu-rich domain region spans residues 442–477; sequence REKDRDRDRERDRDRERERDRDRERERTRERERERD. The sufficient for interaction with AHCYL1 stretch occupies residues 478-535; that stretch reads HSPTPSVFNSDEERYRYREYAERGYERHRASREKEERHRERRHREKEETRHKSSRSNS. Phosphoserine is present on Ser-479. A Phosphothreonine modification is found at Thr-481. A phosphoserine mark is found at Ser-483 and Ser-487. Residues 488-515 show a composition bias toward basic and acidic residues; that stretch reads DEERYRYREYAERGYERHRASREKEERH. Basic residues predominate over residues 529–538; it reads KSSRSNSRRR. At Ser-541 the chain carries Phosphoserine. A compositionally biased stretch (basic residues) spans 547–557; it reads HRRHKHKKSKR.

Belongs to the FIP1 family. As to quaternary structure, component of the cleavage and polyadenylation specificity factor (CPSF) complex, composed of CPSF1, CPSF2, CPSF3, CPSF4 and FIP1L1. Found in a complex with CPSF1, FIP1L1 and PAPOLA. Interacts with CPSF1, CPSF4, CSTF2 and CSTF3. Interacts with AHCYL1 (when phosphorylated); the interaction is direct and associates AHCYL1 with the CPSF complex and RNA. Interacts with PAPOLA; the interaction seems to be increased by the interaction with AHCYL1. Interacts with NUDT21/CPSF5; this interaction occurs in a RNA sequence-specific manner. Interacts (preferentially via unphosphorylated form and Arg/Glu/Asp-rich domain) with CPSF6 (via Arg/Ser-rich domain); this interaction mediates, at least in part, the interaction between the CFIm and CPSF complexes and may be inhibited by CPSF6 hyper-phosphorylation. Interacts (preferentially via unphosphorylated form and Arg/Asp/Glu-rich domain) with CPSF7 (via Arg/Ser-rich domain); this interaction mediates, at least in part, the interaction between the CFIm and CPSF complexes and may be inhibited by CPSF7 hyper-phosphorylation.

The protein resides in the nucleus. Its function is as follows. Component of the cleavage and polyadenylation specificity factor (CPSF) complex that plays a key role in pre-mRNA 3'-end formation, recognizing the AAUAAA signal sequence and interacting with poly(A) polymerase and other factors to bring about cleavage and poly(A) addition. FIP1L1 contributes to poly(A) site recognition and stimulates poly(A) addition. Binds to U-rich RNA sequence elements surrounding the poly(A) site. May act to tether poly(A) polymerase to the CPSF complex. The protein is Pre-mRNA 3'-end-processing factor FIP1 (Fip1l1) of Mus musculus (Mouse).